Consider the following 114-residue polypeptide: Transcription factor S1 (114 aa).

Positions 1-43 are N-ZR; that stretch reads MIVVKFCPKCNSMMVPKKSNGKNVYRCTKCGYEKEVPETTIVV. Cysteine 7, cysteine 10, cysteine 27, cysteine 30, cysteine 75, and cysteine 78 together coordinate Zn(2+). The tract at residues 63–114 is C-ZR; that stretch reads MPSGAQKIKGVLCPSCKNDEAYFWILQTRRADEPPTRFYKCTKCGKVWREYE. The TFIIS-type zinc finger occupies 71–111; it reads KGVLCPSCKNDEAYFWILQTRRADEPPTRFYKCTKCGKVWR. Active-site residues include aspartate 94 and glutamate 95. The Zn(2+) site is built by cysteine 103 and cysteine 106.

This sequence belongs to the archaeal RpoM/eukaryotic RPA12/RPB9/RPC11 RNA polymerase family. Interacts with RNA polymerase; probably competes with TFS4 for the same binding site. Zn(2+) is required as a cofactor.

Its function is as follows. Induces RNA cleavage activity in the RNA polymerase. Induces rapid cleavage of a stalled transcription elongation complex with a 2-nucleotide reduction at the 3' end of the nascent RNA. Truncated RNA is able to resume elongation. During transcription elongation it enhances processivity. Involved in transcriptional proofreading and fidelity. Misincorporation of nucleotides during elongation of transcription leads to arrested elongation complexes which are rescued by TFS-promoted removal of a dinucleotide from the 3'-end. TFS1 is able to induce a cleavage resynthesis cycle in stalled elongation complexes (resulting from the next missing nucleotide or a reduced incorporation rate of a wrong nucleotide) preventing misincorporation and enabling proofreading in a post-incorporation manner. Pausing of elongation complexes is the main determinant of TFS-induced RNA cleavage. This chain is Transcription factor S1, found in Saccharolobus solfataricus (strain ATCC 35092 / DSM 1617 / JCM 11322 / P2) (Sulfolobus solfataricus).